A 138-amino-acid chain; its full sequence is Small ribosomal subunit protein bS16 (138 aa).

The disordered stretch occupies residues 92 to 138 (QAAKREADAKQAAKEAAEAKAAAEAEAKAAAEAESADAGAEEAPAEA). Basic and acidic residues predominate over residues 94–122 (AKREADAKQAAKEAAEAKAAAEAEAKAAA).

It belongs to the bacterial ribosomal protein bS16 family.

In Synechococcus sp. (strain WH7803), this protein is Small ribosomal subunit protein bS16.